Consider the following 317-residue polypeptide: Testis-expressed protein 19.2 (317 aa).

Acidic residues predominate over residues 64–75 (MELSEASSEPEE). The tract at residues 64 to 113 (MELSEASSEPEEWPGLSGGEGQGHLPHGISVSAGSGAQGPQPVPTELGPQ) is disordered. The tract at residues 101–145 (QGPQPVPTELGPQEAVPLDLGPEDAEWTQALPWRFDGLSPCSHWL) is important for interaction with piRNA.

As to quaternary structure, interacts with UBR2. Interacts with piRNA-associated proteins DDX4, EDC4, MAEL, PIWIL1, PIWIL2, RANBP9 and TDRD6. In terms of tissue distribution, specifically expressed in somatic cells of male gonad lineage.

Its subcellular location is the cytoplasm. In terms of biological role, may be required during spermatogenesis, probably by participating in the repression of retrotransposable elements and prevent their mobilization. With its paralog, Tex19.1, collaborates with the Piwi-interacting RNA (piRNA) pathway, which mediates the repression of transposable elements during meiosis by forming complexes composed of piRNAs and Piwi proteins. Interacts with Piwi proteins and directly binds piRNAs, a class of 24 to 30 nucleotide RNAs that are generated by a Dicer-independent mechanism and are primarily derived from transposons and other repeated sequence elements. This chain is Testis-expressed protein 19.2 (Tex19.2), found in Mus musculus (Mouse).